Here is a 256-residue protein sequence, read N- to C-terminus: Phosphoribosylaminoimidazole-succinocarboxamide synthase (256 aa).

Residues 234–256 form a disordered region; it reads KPQKPAAAKKKAPVSKKTVKRTR. Positions 240–256 are enriched in basic residues; that stretch reads AAKKKAPVSKKTVKRTR.

This sequence belongs to the SAICAR synthetase family.

It catalyses the reaction 5-amino-1-(5-phospho-D-ribosyl)imidazole-4-carboxylate + L-aspartate + ATP = (2S)-2-[5-amino-1-(5-phospho-beta-D-ribosyl)imidazole-4-carboxamido]succinate + ADP + phosphate + 2 H(+). Its pathway is purine metabolism; IMP biosynthesis via de novo pathway; 5-amino-1-(5-phospho-D-ribosyl)imidazole-4-carboxamide from 5-amino-1-(5-phospho-D-ribosyl)imidazole-4-carboxylate: step 1/2. The sequence is that of Phosphoribosylaminoimidazole-succinocarboxamide synthase from Methanoregula boonei (strain DSM 21154 / JCM 14090 / 6A8).